A 102-amino-acid polypeptide reads, in one-letter code: uncharacterized protein (102 aa).

This is an uncharacterized protein from Acidianus filamentous virus 1 (isolate United States/Yellowstone) (AFV-1).